The primary structure comprises 772 residues: Serine/threonine-protein kinase tousled-like 2 (772 aa).

The tract at residues 24–126 is disordered; it reads GVSKGPLNSE…SNPLPRRVEQ (103 aa). Residues 29–44 are compositionally biased toward polar residues; it reads PLNSESSNQSLCSVGS. Positions 46 to 61 are enriched in basic and acidic residues; sequence SDKEVETPEKKQNDQR. 6 positions are modified to phosphoserine: serine 73, serine 94, serine 99, serine 115, serine 117, and serine 134. The segment at 180-208 is disordered; that stretch reads QNSPSSTGSGNTEHSCSSQKQISIQHRQT. Residues 225–276 are required for interaction with TLK1 and DYNLL1/LC8; it reads NSDLEKKEGRIDDLLRANCDLRRQIDEQQKMLEKYKERLNRCVTMSKKLLIE. 2 coiled-coil regions span residues 225–276 and 317–347; these read NSDL…LLIE and AFQNLIKQQERINSQREEIERQRKMLAKRKP. The segment at 342–385 is disordered; sequence LAKRKPPAMGQAPPATNEQKQRKSKTNGAENETPSSGNTELKDT. A compositionally biased stretch (polar residues) spans 367-380; the sequence is TNGAENETPSSGNT. A coiled-coil region spans residues 403-451; the sequence is HEQEEIFKLRLGHLKKEEAEIQAELERLERVRNLHIRELKRIHNEDNSQ. In terms of domain architecture, Protein kinase spans 462 to 741; that stretch reads YLLLHLLGRG…VQQLACDPYL (280 aa). ATP is bound by residues 468–476 and lysine 491; that span reads LGRGGFSEV. Aspartate 592 acts as the Proton acceptor in catalysis. Serine 750 is modified (phosphoserine; by CHEK1).

The protein belongs to the protein kinase superfamily. Ser/Thr protein kinase family. As to quaternary structure, monomer. May form homodimers; homodimerization may enhance autophosphoylation and enzymatic activity. Heterodimer with TLK1. Interacts with YWHAZ; association with 14-3-3 proteins such as YWHAZ regulates subcellular location. May also interact with FEZ1/LZTS1 and FEZ2. Interacts with CHD7 and CHD8. Interacts with DYNLL1/LC8. Requires Mg(2+) as cofactor. In terms of processing, phosphorylated at Ser-750, probably by CHEK1. Post-translationally, autophosphorylated; phosphorylation promotes the assembly of higher order oligomers and enzymatic activity. As to expression, detected in placenta, fetal liver, kidney, pancreas, heart and skeletal muscle. Highly expressed in testis. Detected in spleen, thymus, colon, ovary, small intestine, prostate and peripheral blood leukocytes. Almost undetectable in liver and lung.

It is found in the nucleus. The protein resides in the nucleoplasm. It localises to the cytoplasm. The protein localises to the perinuclear region. Its subcellular location is the cytoskeleton. The enzyme catalyses L-seryl-[protein] + ATP = O-phospho-L-seryl-[protein] + ADP + H(+). It catalyses the reaction L-threonyl-[protein] + ATP = O-phospho-L-threonyl-[protein] + ADP + H(+). Cell cycle-regulated, with maximal activity in the S-phase. Rapidly and transiently inhibited by phosphorylation following the generation of DNA double-stranded breaks during S-phase, probably by CHEK1, possibly at Ser-750. This inhibition is cell cycle checkpoint- and ATM-dependent. In terms of biological role, serine/threonine-protein kinase involved in the process of chromatin assembly and probably also DNA replication, transcription, repair, and chromosome segregation. Phosphorylates the chromatin assembly factors ASF1A and ASF1B. Phosphorylation of ASF1A prevents its proteasome-mediated degradation, thereby enhancing chromatin assembly. Negative regulator of amino acid starvation-induced autophagy. The chain is Serine/threonine-protein kinase tousled-like 2 from Homo sapiens (Human).